A 437-amino-acid chain; its full sequence is Adenylosuccinate synthetase (437 aa).

GTP is bound by residues 12-18 and 40-42; these read GDEGKGK and GHT. Aspartate 13 acts as the Proton acceptor in catalysis. Mg(2+)-binding residues include aspartate 13 and glycine 40. Residues 13–16, 38–41, threonine 128, arginine 142, glutamine 223, threonine 238, and arginine 302 each bind IMP; these read DEGK and NAGH. Histidine 41 functions as the Proton donor in the catalytic mechanism. 298–304 provides a ligand contact to substrate; the sequence is TTTGRRR. GTP-binding positions include arginine 304, 330-332, and 412-414; these read KLD and SLG.

Belongs to the adenylosuccinate synthetase family. As to quaternary structure, homodimer. The cofactor is Mg(2+).

Its subcellular location is the cytoplasm. It carries out the reaction IMP + L-aspartate + GTP = N(6)-(1,2-dicarboxyethyl)-AMP + GDP + phosphate + 2 H(+). The protein operates within purine metabolism; AMP biosynthesis via de novo pathway; AMP from IMP: step 1/2. Its function is as follows. Plays an important role in the de novo pathway of purine nucleotide biosynthesis. Catalyzes the first committed step in the biosynthesis of AMP from IMP. The chain is Adenylosuccinate synthetase from Synechococcus sp. (strain RCC307).